A 229-amino-acid polypeptide reads, in one-letter code: Zinc finger matrin-type protein 4 (229 aa).

4 consecutive Matrin-type zinc fingers follow at residues 14–44 (SYCK…KVRL), 72–106 (DKNK…LKLL), 145–175 (RYCG…NAAR), and 198–228 (YRCT…NLKN).

Its subcellular location is the nucleus. The polypeptide is Zinc finger matrin-type protein 4 (Zmat4) (Mus musculus (Mouse)).